The sequence spans 158 residues: Respiratory supercomplex factor 1, mitochondrial (158 aa).

The region spanning Pro5 to Glu96 is the HIG1 domain. The next 2 helical transmembrane spans lie at Pro32–Ile54 and Phe64–Gly86. Residues Met99–Lys158 are a coiled coil.

It belongs to the RCF1 family. In terms of assembly, associates with the respiratory chain complex III/complex IV supercomplex.

The protein localises to the mitochondrion membrane. Its function is as follows. Cytochrome c oxidase subunit which plays a role in assembly of respiratory supercomplexes. This Candida glabrata (strain ATCC 2001 / BCRC 20586 / JCM 3761 / NBRC 0622 / NRRL Y-65 / CBS 138) (Yeast) protein is Respiratory supercomplex factor 1, mitochondrial (RCF1).